A 287-amino-acid polypeptide reads, in one-letter code: Shikimate dehydrogenase (NADP(+)) (287 aa).

Residues 20-22 (SRS) and Thr-67 contribute to the shikimate site. The active-site Proton acceptor is Lys-71. Glu-84 contacts NADP(+). Shikimate contacts are provided by Asn-93 and Asp-108. NADP(+) contacts are provided by residues 132–136 (GAGGA), 156–161 (NRTAAR), and Met-226. Tyr-228 contacts shikimate. Residue Gly-250 participates in NADP(+) binding.

Belongs to the shikimate dehydrogenase family. Homodimer.

It carries out the reaction shikimate + NADP(+) = 3-dehydroshikimate + NADPH + H(+). It participates in metabolic intermediate biosynthesis; chorismate biosynthesis; chorismate from D-erythrose 4-phosphate and phosphoenolpyruvate: step 4/7. Involved in the biosynthesis of the chorismate, which leads to the biosynthesis of aromatic amino acids. Catalyzes the reversible NADPH linked reduction of 3-dehydroshikimate (DHSA) to yield shikimate (SA). This Bordetella bronchiseptica (strain ATCC BAA-588 / NCTC 13252 / RB50) (Alcaligenes bronchisepticus) protein is Shikimate dehydrogenase (NADP(+)).